The primary structure comprises 798 residues: MIKKIVTTCFGLVLGLCVFGVGLVAIAILVTYPKLPSLDSLQHYQPKMPLTIYSADGEVIGIYGEQRREFTKIGDFPEVLRNAVIAAEDKRFYQHWGVDVWGVARAVVGNIVAGGVQSGASTITQQVAKNFYLSSEKTFTRKFNEALLAYKIEQSLSKDKILELYFNQIYLGQRAYGFASAAQIYFNKDVRELTLAEVAMLAGLPKAPSAYNPIVNPERAKLRQKYILNNMLEEKMITLQQRDQALNEELHYERFVQKIDQSALYVAEMVRQELYEKYGEDAYTQGFKVYTTVRTDHQKVATEALRKALRNFDRGSSYRGAESYIDLSKGEDVEETVSQYLSGLYTVDKMVPAIVLDVTKRKNVVIQLPSGKRVTLDGRSLGFAARAVNNEKMGESRIRRGSVIRVRNNGGRWVVVQEPLLQATLVSLDAKTGAVRALVGGYDFHSKTFNRAAQAMRQPGSTFKPFIYSAALSKGMTASTMVNDAPISLPGKGANGSVWTPKNSDGRYSGYITLRQALTASKNMVSIRILMSIGVGYAHEYIQRFGFKPSELPASLSMALGTGETTPLKIAEAYSVFANGGYRVSSHVIDKIYGSDGRLRAQMQPLVAGQNAPQAIDPRNAYIMYKIMQDVVRVGTARGAAALGRSDIAGKTGTTNDNKDAWFVGFNPDVVTAVYIGFDKPKSMGRAGYGGTIAVPVWVDYMRFALKGGQGKGMKVPEGVVSSNGEYYMKERMVTDPGLVVDNSGIAAQPSRRIREDKEAGAEDVERGAADEVRQEVQETPVLPSNTGSKQPQLDSLF.

Residues 1–9 (MIKKIVTTC) lie on the Cytoplasmic side of the membrane. The helical; Signal-anchor for type II membrane protein transmembrane segment at 10–30 (FGLVLGLCVFGVGLVAIAILV) threads the bilayer. At 31–798 (TYPKLPSLDS…SKQPQLDSLF (768 aa)) the chain is on the periplasmic side. Positions 50–218 (LTIYSADGEV…SAYNPIVNPE (169 aa)) are transglycosylase. The Proton donor; for transglycosylase activity role is filled by E88. Positions 414–700 (VVVQEPLLQA…GTIAVPVWVD (287 aa)) are transpeptidase. The active-site Acyl-ester intermediate; for transpeptidase activity is S461. The interval 751 to 798 (SRRIREDKEAGAEDVERGAADEVRQEVQETPVLPSNTGSKQPQLDSLF) is disordered. A compositionally biased stretch (basic and acidic residues) spans 753–777 (RIREDKEAGAEDVERGAADEVRQEV). The span at 783 to 798 (LPSNTGSKQPQLDSLF) shows a compositional bias: polar residues.

This sequence in the N-terminal section; belongs to the glycosyltransferase 51 family. The protein in the C-terminal section; belongs to the transpeptidase family.

It localises to the cell inner membrane. The catalysed reaction is [GlcNAc-(1-&gt;4)-Mur2Ac(oyl-L-Ala-gamma-D-Glu-L-Lys-D-Ala-D-Ala)](n)-di-trans,octa-cis-undecaprenyl diphosphate + beta-D-GlcNAc-(1-&gt;4)-Mur2Ac(oyl-L-Ala-gamma-D-Glu-L-Lys-D-Ala-D-Ala)-di-trans,octa-cis-undecaprenyl diphosphate = [GlcNAc-(1-&gt;4)-Mur2Ac(oyl-L-Ala-gamma-D-Glu-L-Lys-D-Ala-D-Ala)](n+1)-di-trans,octa-cis-undecaprenyl diphosphate + di-trans,octa-cis-undecaprenyl diphosphate + H(+). The enzyme catalyses Preferential cleavage: (Ac)2-L-Lys-D-Ala-|-D-Ala. Also transpeptidation of peptidyl-alanyl moieties that are N-acyl substituents of D-alanine.. It functions in the pathway cell wall biogenesis; peptidoglycan biosynthesis. Its function is as follows. Cell wall formation. Synthesis of cross-linked peptidoglycan from the lipid intermediates. The enzyme has a penicillin-insensitive transglycosylase N-terminal domain (formation of linear glycan strands) and a penicillin-sensitive transpeptidase C-terminal domain (cross-linking of the peptide subunits). The chain is Penicillin-binding protein 1A (mrcA) from Neisseria cinerea.